The primary structure comprises 128 residues: uncharacterized protein (128 aa).

The VOC domain occupies 1 to 126 (MHHIELYVSD…DRIKVELVAP (126 aa)).

This is an uncharacterized protein from Bacillus subtilis (strain 168).